The following is a 164-amino-acid chain: 6,7-dimethyl-8-ribityllumazine synthase (164 aa).

Residues F24, 58 to 60 (ALE), and 82 to 84 (AVI) contribute to the 5-amino-6-(D-ribitylamino)uracil site. 87-88 (ET) is a (2S)-2-hydroxy-3-oxobutyl phosphate binding site. H90 acts as the Proton donor in catalysis. Position 115 (N115) interacts with 5-amino-6-(D-ribitylamino)uracil. R129 provides a ligand contact to (2S)-2-hydroxy-3-oxobutyl phosphate.

The protein belongs to the DMRL synthase family.

The enzyme catalyses (2S)-2-hydroxy-3-oxobutyl phosphate + 5-amino-6-(D-ribitylamino)uracil = 6,7-dimethyl-8-(1-D-ribityl)lumazine + phosphate + 2 H2O + H(+). The protein operates within cofactor biosynthesis; riboflavin biosynthesis; riboflavin from 2-hydroxy-3-oxobutyl phosphate and 5-amino-6-(D-ribitylamino)uracil: step 1/2. Its function is as follows. Catalyzes the formation of 6,7-dimethyl-8-ribityllumazine by condensation of 5-amino-6-(D-ribitylamino)uracil with 3,4-dihydroxy-2-butanone 4-phosphate. This is the penultimate step in the biosynthesis of riboflavin. This chain is 6,7-dimethyl-8-ribityllumazine synthase, found in Ralstonia nicotianae (strain ATCC BAA-1114 / GMI1000) (Ralstonia solanacearum).